A 419-amino-acid polypeptide reads, in one-letter code: Inositol-tetrakisphosphate 1-kinase (419 aa).

A 1D-myo-inositol 1,3,4-trisphosphate-binding site is contributed by Lys18. Residues Arg106 and Lys157 each contribute to the ATP site. An ATP-grasp domain is found at 117 to 325; that stretch reads EAYMKDDRIC…IASVLQGQSS (209 aa). Positions 167 and 199 each coordinate 1D-myo-inositol 1,3,4-trisphosphate. Residues 188–199, Ser214, Ser232, and Ser236 each bind ATP; that span reads QNFINHNAVLYK. Mg(2+) contacts are provided by Asp281, Asp295, and Asn297. 1D-myo-inositol 1,3,4-trisphosphate is bound at residue Asn297. N6-acetyllysine; by EP300 and CREBBP is present on Lys388. At Ser401 the chain carries Phosphoserine. N6-acetyllysine; by EP300 and CREBBP is present on Lys415.

This sequence belongs to the ITPK1 family. In terms of assembly, monomer. Interacts with GPS1/COPS1. Mg(2+) serves as cofactor. Acetylation by EP300 and CREBBP destabilizes ITPK1, and down-regulates enzymatic activity. Deacetylated by SIRT1.

It catalyses the reaction 1D-myo-inositol 3,4,5,6-tetrakisphosphate + ATP = 1D-myo-inositol 1,3,4,5,6-pentakisphosphate + ADP + H(+). The enzyme catalyses 1D-myo-inositol 1,3,4-trisphosphate + ATP = 1D-myo-inositol 1,3,4,5-tetrakisphosphate + ADP + H(+). The catalysed reaction is 1D-myo-inositol 1,3,4-trisphosphate + ATP = 1D-myo-inositol 1,3,4,6-tetrakisphosphate + ADP + H(+). It carries out the reaction 1D-myo-inositol 3,4,6-trisphosphate + ATP = 1D-myo-inositol 1,3,4,6-tetrakisphosphate + ADP + H(+). It catalyses the reaction 1D-myo-inositol 1,3,4-trisphosphate + 1D-myo-inositol 1,3,4,5,6-pentakisphosphate = 1D-myo-inositol 3,4,5,6-tetrakisphosphate + 1D-myo-inositol 1,3,4,6-tetrakisphosphate. The enzyme catalyses 1D-myo-inositol 1,3,4-trisphosphate + 1D-myo-inositol 1,3,4,5,6-pentakisphosphate = 1D-myo-inositol 3,4,5,6-tetrakisphosphate + 1D-myo-inositol 1,3,4,5-tetrakisphosphate. Its function is as follows. Kinase that can phosphorylate various inositol polyphosphate such as Ins(3,4,5,6)P4 or Ins(1,3,4)P3. Phosphorylates Ins(3,4,5,6)P4 at position 1 to form Ins(1,3,4,5,6)P5. This reaction is thought to have regulatory importance, since Ins(3,4,5,6)P4 is an inhibitor of plasma membrane Ca(2+)-activated Cl(-) channels, while Ins(1,3,4,5,6)P5 is not. Also phosphorylates Ins(1,3,4)P3 on O-5 and O-6 to form Ins(1,3,4,6)P4, an essential molecule in the hexakisphosphate (InsP6) pathway. Also acts as an inositol polyphosphate phosphatase that dephosphorylates Ins(1,3,4,5)P4 and Ins(1,3,4,6)P4 to Ins(1,3,4)P3, and Ins(1,3,4,5,6)P5 to Ins(3,4,5,6)P4. May also act as an isomerase that interconverts the inositol tetrakisphosphate isomers Ins(1,3,4,5)P4 and Ins(1,3,4,6)P4 in the presence of ADP and magnesium. Probably acts as the rate-limiting enzyme of the InsP6 pathway. Modifies TNF-alpha-induced apoptosis by interfering with the activation of TNFRSF1A-associated death domain. Plays an important role in MLKL-mediated necroptosis. Produces highly phosphorylated inositol phosphates such as inositolhexakisphosphate (InsP6) which bind to MLKL mediating the release of an N-terminal auto-inhibitory region leading to its activation. Essential for activated phospho-MLKL to oligomerize and localize to the cell membrane during necroptosis. This Bos taurus (Bovine) protein is Inositol-tetrakisphosphate 1-kinase (ITPK1).